We begin with the raw amino-acid sequence, 407 residues long: Aurora kinase A-A (407 aa).

The span at 1 to 10 (MERAVKENHK) shows a compositional bias: basic and acidic residues. Positions 1–130 (MERAVKENHK…KTSAVPKEEG (130 aa)) are disordered. 2 stretches are compositionally biased toward polar residues: residues 67 to 77 (ILSSQKPTTQI) and 84 to 110 (QGHQSSKPQGPNENRNPQQTSHSSTPN). One can recognise a Protein kinase domain in the interval 140–390 (FEIGRPLGKG…LKGVLEHPWI (251 aa)). ATP contacts are provided by residues K150, K169, and 217–220 (LDYA). Catalysis depends on D263, which acts as the Proton acceptor. D281 provides a ligand contact to ATP. The interval 287–300 (HAPSSRRTTLCGTL) is activation segment.

It belongs to the protein kinase superfamily. Ser/Thr protein kinase family. Aurora subfamily. Interacts with kif2c and kif11. Phosphorylated. Autophosphorylated on a serine residue. As to expression, highly expressed in ovary and testis.

It is found in the cytoplasm. Its subcellular location is the cytoskeleton. The protein localises to the spindle. The protein resides in the microtubule organizing center. It localises to the centrosome. The catalysed reaction is L-seryl-[protein] + ATP = O-phospho-L-seryl-[protein] + ADP + H(+). It carries out the reaction L-threonyl-[protein] + ATP = O-phospho-L-threonyl-[protein] + ADP + H(+). In terms of biological role, mitotic serine/threonine kinases that contributes to the regulation of cell cycle progression. Associates with the centrosome and the spindle microtubules during mitosis and plays a critical role in various mitotic events including the establishment of mitotic spindle, centrosome duplication, centrosome separation as well as maturation, chromosomal alignment, spindle assembly checkpoint, and cytokinesis. Phosphorylates numerous target proteins. Important for microtubule formation and/or stabilization. In Xenopus laevis (African clawed frog), this protein is Aurora kinase A-A (aurka-a).